We begin with the raw amino-acid sequence, 194 residues long: Putative manganese efflux pump MntP (194 aa).

The next 6 membrane-spanning stretches (helical) occupy residues 3 to 23, 37 to 57, 65 to 85, 112 to 132, 139 to 159, and 170 to 190; these read PITI…AAIG, LYVA…GWLL, IATF…IHMI, LAAT…SLAF, IVAA…VMLG, and AEIV…YEHL.

The protein belongs to the MntP (TC 9.B.29) family.

The protein localises to the cell inner membrane. In terms of biological role, probably functions as a manganese efflux pump. The protein is Putative manganese efflux pump MntP of Xylella fastidiosa (strain 9a5c).